The chain runs to 450 residues: tRNA modification GTPase MnmE (450 aa).

(6S)-5-formyl-5,6,7,8-tetrahydrofolate-binding residues include Arg-21, Glu-80, and Lys-119. One can recognise a TrmE-type G domain in the interval 213 to 373 (GIKVVIIGKP…LEEEIIKSVK (161 aa)). A K(+)-binding site is contributed by Asn-223. GTP contacts are provided by residues 223–228 (NVGKST), 242–248 (TDIPGTT), and 267–270 (DTAG). A Mg(2+)-binding site is contributed by Ser-227. Thr-242, Ile-244, and Thr-247 together coordinate K(+). Mg(2+) is bound at residue Thr-248. Lys-450 provides a ligand contact to (6S)-5-formyl-5,6,7,8-tetrahydrofolate.

Belongs to the TRAFAC class TrmE-Era-EngA-EngB-Septin-like GTPase superfamily. TrmE GTPase family. In terms of assembly, homodimer. Heterotetramer of two MnmE and two MnmG subunits. The cofactor is K(+).

The protein localises to the cytoplasm. Functionally, exhibits a very high intrinsic GTPase hydrolysis rate. Involved in the addition of a carboxymethylaminomethyl (cmnm) group at the wobble position (U34) of certain tRNAs, forming tRNA-cmnm(5)s(2)U34. The protein is tRNA modification GTPase MnmE of Pseudothermotoga lettingae (strain ATCC BAA-301 / DSM 14385 / NBRC 107922 / TMO) (Thermotoga lettingae).